The chain runs to 161 residues: Cyclic pyranopterin monophosphate synthase (161 aa).

Substrate is bound by residues 75–77 (LCH) and 113–114 (ME). Residue Asp-128 is part of the active site.

This sequence belongs to the MoaC family. In terms of assembly, homohexamer; trimer of dimers.

The catalysed reaction is (8S)-3',8-cyclo-7,8-dihydroguanosine 5'-triphosphate = cyclic pyranopterin phosphate + diphosphate. It functions in the pathway cofactor biosynthesis; molybdopterin biosynthesis. Its function is as follows. Catalyzes the conversion of (8S)-3',8-cyclo-7,8-dihydroguanosine 5'-triphosphate to cyclic pyranopterin monophosphate (cPMP). The sequence is that of Cyclic pyranopterin monophosphate synthase from Edwardsiella ictaluri (strain 93-146).